Here is a 496-residue protein sequence, read N- to C-terminus: 2,3-bisphosphoglycerate-independent phosphoglycerate mutase (496 aa).

Mn(2+) contacts are provided by aspartate 12 and serine 62. The active-site Phosphoserine intermediate is the serine 62. Substrate contacts are provided by residues histidine 121, 150-151, arginine 181, arginine 187, 252-255, and lysine 317; these read RD and RNDR. Residues aspartate 384, histidine 388, aspartate 425, histidine 426, and histidine 444 each coordinate Mn(2+).

The protein belongs to the BPG-independent phosphoglycerate mutase family. Monomer. The cofactor is Mn(2+).

It catalyses the reaction (2R)-2-phosphoglycerate = (2R)-3-phosphoglycerate. The protein operates within carbohydrate degradation; glycolysis; pyruvate from D-glyceraldehyde 3-phosphate: step 3/5. In terms of biological role, catalyzes the interconversion of 2-phosphoglycerate and 3-phosphoglycerate. In Anaplasma phagocytophilum (strain HZ), this protein is 2,3-bisphosphoglycerate-independent phosphoglycerate mutase.